Consider the following 428-residue polypeptide: L-gulono-1,4-lactone dehydrogenase (428 aa).

The region spanning 12 to 179 (QVCAPSAIVR…SQVTLQTVPL (168 aa)) is the FAD-binding PCMH-type domain.

It belongs to the oxygen-dependent FAD-linked oxidoreductase family. Requires a divalent metal cation as cofactor.

The catalysed reaction is L-gulono-1,4-lactone + 2 Fe(III)-[cytochrome c] = L-ascorbate + 2 Fe(II)-[cytochrome c] + 3 H(+). The protein operates within cofactor biosynthesis; L-ascorbate biosynthesis. Oxidizes L-gulono-1,4-lactone to L-xylo-hexulonolactone which spontaneously isomerizes to L-ascorbate. The polypeptide is L-gulono-1,4-lactone dehydrogenase (Mycobacterium tuberculosis (strain CDC 1551 / Oshkosh)).